A 548-amino-acid chain; its full sequence is Kinetochore and Eb1-associated basic protein (548 aa).

Disordered regions lie at residues 1–51 (MSSM…PKHP) and 82–181 (YRSS…IRPK). 3 stretches are compositionally biased toward basic and acidic residues: residues 20-29 (RTKELLERQR), 104-116 (RTWEGPKTPEFRS), and 127-141 (PRPRRAKELLEDLRS). The tract at residues 100-253 (QNRQRTWEGP…TTSKRKLDFK (154 aa)) is important for kinetochore and microtubule localization. Polar residues predominate over residues 144-155 (QGTPATKIPSQR). Residues 149–152 (TKIP) carry the SXIP motif 1 motif. Residues 156–165 (NPKENQELSK) show a composition bias toward basic and acidic residues. The span at 166-175 (SHTCIPSSEP) shows a compositional bias: polar residues. The short motif at 168 to 171 (TCIP) is the SXIP motif 2 element. Residues 237 to 372 (SDKGIKLTTS…MCALPVVSEK (136 aa)) are CH (calponin-homology)-like region, which is not required for kinetochore and microtubule localization. Residues 386-457 (YDVMSLQQKF…LQLQRLRLQE (72 aa)) adopt a coiled-coil conformation.

As to quaternary structure, interacts with Eb1 via the two SxIP motifs; the interaction is not required for kebab kinetochore localization.

Its subcellular location is the cytoplasm. The protein resides in the perinuclear region. It is found in the chromosome. It localises to the centromere. The protein localises to the kinetochore. Its subcellular location is the cytoskeleton. The protein resides in the spindle. The protein is Kinetochore and Eb1-associated basic protein of Drosophila melanogaster (Fruit fly).